The following is a 348-amino-acid chain: D-fructose 1,6-bisphosphatase class 2/sedoheptulose 1,7-bisphosphatase 2 (348 aa).

Residues Asp33, Glu57, Asp97, and Glu100 each coordinate Mn(2+). Residues Glu100–Thr102, Tyr131, Arg176–Arg178, and Asp198–Asp200 each bind substrate. Glu225 is a binding site for Mn(2+).

The protein belongs to the FBPase class 2 family. Homotetramer.

The catalysed reaction is beta-D-fructose 1,6-bisphosphate + H2O = beta-D-fructose 6-phosphate + phosphate. It carries out the reaction D-sedoheptulose 1,7-bisphosphate + H2O = D-sedoheptulose 7-phosphate + phosphate. It functions in the pathway carbohydrate biosynthesis; Calvin cycle. Catalyzes the hydrolysis of fructose 1,6-bisphosphate (Fru 1,6-P2) and sedoheptulose 1,7-bisphosphate (Sed 1,7-P2) to fructose 6-phosphate and sedoheptulose 7-phosphate, respectively. This Acaryochloris marina (strain MBIC 11017) protein is D-fructose 1,6-bisphosphatase class 2/sedoheptulose 1,7-bisphosphatase 2.